Consider the following 770-residue polypeptide: Potassium transporter 25 (770 aa).

The Cytoplasmic portion of the chain corresponds to 1-23 (MDLEAAHGAAAAPGKRRRRARES). The chain crosses the membrane as a helical span at residues 24–44 (WGASLLLAYQSLGVVYGDVAT). At 45–70 (SPLYVYKSAFAGDDIQHSAGNEEIYG) the chain is on the extracellular side. Residues 71 to 91 (VLSFVFWTLTLISLVKYVLIV) form a helical membrane-spanning segment. Residues 92–152 (LRADDGGEGG…MLERYRVLQR (61 aa)) are Cytoplasmic-facing. A helical membrane pass occupies residues 153 to 173 (LLLLFALLGTCMVIGDGVLTP). Residues 174–194 (AVSVYSAVSGLELSMEHEHHK) lie on the Extracellular side of the membrane. The helical transmembrane segment at 195 to 215 (YVQLPVTCAILIGLFALQHYG) threads the bilayer. Over 216–218 (THR) the chain is Cytoplasmic. A helical membrane pass occupies residues 219–239 (VGFIFAPIVCVWLLCISAIGV). The Extracellular portion of the chain corresponds to 240–267 (YNIVHWNHHVYRALSPYYMYQFLKKTQT). The chain crosses the membrane as a helical span at residues 268–288 (GGWMSLGGILLCVTGSEAMYA). Topologically, residues 289-299 (DLGHFSQSSIK) are cytoplasmic. A helical transmembrane segment spans residues 300–320 (IAFMSVVYPALVLAYMGQAAY). Residues 321–346 (ISQHHSFENAYHIGFYVSVPEKLRWP) lie on the Extracellular side of the membrane. A helical transmembrane segment spans residues 347 to 367 (VLVIAILAAVVGSQAVITGTF). Over 368–394 (SIIKQCSSLSCFPGVKIVHTSSTVHGQ) the chain is Cytoplasmic. The chain crosses the membrane as a helical span at residues 395-415 (IYIPEINWILMILCLAVTLGF). Topologically, residues 416 to 425 (RNTKHLANAQ) are extracellular. The helical transmembrane segment at 426-446 (GLAVITVMLVTTCLMSLVIVL) threads the bilayer. Over 447–451 (CWNKS) the chain is Cytoplasmic. Residues 452-472 (IFLALGFLIFFGTIEVLYFSA) traverse the membrane as a helical segment. Over 473 to 479 (SLVKFHE) the chain is Extracellular. The chain crosses the membrane as a helical span at residues 480–500 (GAWVPITLSFIFMIVMCVWHY). Over 501-770 (GTIKKYEFDF…TLEVGMVYQV (270 aa)) the chain is Cytoplasmic.

It belongs to the HAK/KUP transporter (TC 2.A.72.3) family.

Its subcellular location is the membrane. In terms of biological role, high-affinity potassium transporter. The polypeptide is Potassium transporter 25 (HAK25) (Oryza sativa subsp. japonica (Rice)).